The sequence spans 805 residues: Hypoxia-inducible factor 1-alpha (805 aa).

The disordered stretch occupies residues 1-26; that stretch reads MEGSVVVSEKKRISSERRKEKSRDAA. A compositionally biased stretch (basic and acidic residues) spans 8–26; the sequence is SEKKRISSERRKEKSRDAA. The bHLH domain maps to 17–70; that stretch reads RRKEKSRDAARCRRSNESEVFYELSHELPLPHNVSSHLDKASIMRLDHQLPAVE. PAS domains follow at residues 85–157 and 229–300; these read DKQL…PAKK and PHPS…TKGQ. Positions 303–346 constitute a PAC domain; that stretch reads TGQYRMLAKKGGYVWVETQATVIYNSKNSQPQCIVCVNYVLSEV. 4-hydroxyproline occurs at positions 404 and 560. Positions 628–669 are disordered; it reads KESTSAPVSPYNGNRSRTSSPVRPAKAVVDKTEKSRPGTPNL. Residues 629-648 are compositionally biased toward polar residues; it reads ESTSAPVSPYNGNRSRTSSP. Asn782 is modified ((3S)-3-hydroxyasparagine).

As to quaternary structure, efficient DNA binding requires heterodimerization of an alpha and a beta/ARNT subunit. Post-translationally, in normoxia, is hydroxylated on Pro-404 and Pro-560. The hydroxylated prolines promote interaction with VHL, initiating rapid ubiquitination and subsequent proteasomal degradation. Under hypoxia, proline hydroxylation is impaired and ubiquitination is attenuated, resulting in stabilization. In terms of processing, in normoxia, is hydroxylated on Asn-782, thus abrogating interaction with CREBBP and EP300 and preventing transcriptional activation. The iron and 2-oxoglutarate dependent 3-hydroxylation of asparagine is (S) stereospecific within HIF CTAD domains.

It localises to the cytoplasm. The protein resides in the nucleus. It is found in the nucleus speckle. With respect to regulation, induced by reactive oxygen species (ROS). Functionally, functions as a master transcriptional regulator of the adaptive response to hypoxia. Under hypoxic conditions, activates the transcription of over 40 genes, including erythropoietin, glucose transporters, glycolytic enzymes, vascular endothelial growth factor, HILPDA, and other genes whose protein products increase oxygen delivery or facilitate metabolic adaptation to hypoxia. Plays an essential role in embryonic vascularization, tumor angiogenesis and pathophysiology of ischemic disease. This Xenopus laevis (African clawed frog) protein is Hypoxia-inducible factor 1-alpha (hif1a).